The primary structure comprises 727 residues: Elongation factor 2 (727 aa).

The 242-residue stretch at 19–260 (EQIRNMGICA…MSIKHLPNPL (242 aa)) folds into the tr-type G domain. Residues 28 to 35 (AHIDHGKT), 94 to 98 (DTPGH), and 148 to 151 (NKVD) each bind GTP. Diphthamide is present on H603.

This sequence belongs to the TRAFAC class translation factor GTPase superfamily. Classic translation factor GTPase family. EF-G/EF-2 subfamily.

It is found in the cytoplasm. Its function is as follows. Catalyzes the GTP-dependent ribosomal translocation step during translation elongation. During this step, the ribosome changes from the pre-translocational (PRE) to the post-translocational (POST) state as the newly formed A-site-bound peptidyl-tRNA and P-site-bound deacylated tRNA move to the P and E sites, respectively. Catalyzes the coordinated movement of the two tRNA molecules, the mRNA and conformational changes in the ribosome. This chain is Elongation factor 2, found in Methanococcus maripaludis (strain DSM 14266 / JCM 13030 / NBRC 101832 / S2 / LL).